The sequence spans 157 residues: Ribosomal RNA large subunit methyltransferase H (157 aa).

S-adenosyl-L-methionine-binding positions include Leu74, Gly106, and 125 to 130 (LGNITF).

The protein belongs to the RNA methyltransferase RlmH family. Homodimer.

Its subcellular location is the cytoplasm. It catalyses the reaction pseudouridine(1915) in 23S rRNA + S-adenosyl-L-methionine = N(3)-methylpseudouridine(1915) in 23S rRNA + S-adenosyl-L-homocysteine + H(+). Its function is as follows. Specifically methylates the pseudouridine at position 1915 (m3Psi1915) in 23S rRNA. This chain is Ribosomal RNA large subunit methyltransferase H, found in Lawsonia intracellularis (strain PHE/MN1-00).